Reading from the N-terminus, the 369-residue chain is Cytochrome b561 and DOMON domain-containing protein At3g07570 (369 aa).

Positions 1–22 (MKLYSVSIIIFVLIALSTIVNA) are cleaved as a signal peptide. The DOMON domain occupies 55 to 167 (QNFILRYART…PRQSLLYAVG (113 aa)). One can recognise a Cytochrome b561 domain in the interval 174 to 369 (SSPDFRLREH…GLEVRKFLKK (196 aa)). The helical transmembrane segment at 212–232 (THGLMNMFGWGILIIVGAIVA) threads the bilayer. Heme b contacts are provided by H213 and H246. The next 2 helical transmembrane spans lie at 247-267 (IALQTTGFLLGLTGVICGLVL) and 279-299 (HKGLGITILVMGVLQMLALLA). Heme b is bound by residues H279 and H315. A run of 2 helical transmembrane segments spans residues 321 to 341 (LLIILAISNIFYGIHLAKAGT) and 343 to 363 (WNGGYGFAVAVLALTAIGLEV).

The cofactor is heme b.

It is found in the membrane. Functionally, may act as a catecholamine-responsive trans-membrane electron transporter. The polypeptide is Cytochrome b561 and DOMON domain-containing protein At3g07570 (Arabidopsis thaliana (Mouse-ear cress)).